The primary structure comprises 354 residues: tRNA-specific 2-thiouridylase MnmA (354 aa).

ATP contacts are provided by residues 6–13 (LLSGGVDS) and Leu33. The active-site Nucleophile is Cys100. The cysteines at positions 100 and 195 are disulfide-linked. ATP is bound at residue Gly123. An interaction with tRNA region spans residues 145–147 (KDQ). The active-site Cysteine persulfide intermediate is Cys195.

The protein belongs to the MnmA/TRMU family.

The protein localises to the cytoplasm. It carries out the reaction S-sulfanyl-L-cysteinyl-[protein] + uridine(34) in tRNA + AH2 + ATP = 2-thiouridine(34) in tRNA + L-cysteinyl-[protein] + A + AMP + diphosphate + H(+). Its function is as follows. Catalyzes the 2-thiolation of uridine at the wobble position (U34) of tRNA, leading to the formation of s(2)U34. This Borrelia recurrentis (strain A1) protein is tRNA-specific 2-thiouridylase MnmA.